The chain runs to 74 residues: UPF0435 protein BAA_0470 (74 aa).

Belongs to the UPF0435 family.

This Bacillus anthracis (strain A0248) protein is UPF0435 protein BAA_0470.